The following is a 199-amino-acid chain: GTP cyclohydrolase-2 (199 aa).

Residue 52-56 coordinates GTP; the sequence is RMHSE. 3 residues coordinate Zn(2+): Cys57, Cys68, and Cys70. GTP-binding positions include Gln73, 94–96, and Thr116; that span reads EGR. Asp128 serves as the catalytic Proton acceptor. Arg130 acts as the Nucleophile in catalysis. Positions 151 and 156 each coordinate GTP.

This sequence belongs to the GTP cyclohydrolase II family. Requires Zn(2+) as cofactor.

It catalyses the reaction GTP + 4 H2O = 2,5-diamino-6-hydroxy-4-(5-phosphoribosylamino)-pyrimidine + formate + 2 phosphate + 3 H(+). Its pathway is cofactor biosynthesis; riboflavin biosynthesis; 5-amino-6-(D-ribitylamino)uracil from GTP: step 1/4. In terms of biological role, catalyzes the conversion of GTP to 2,5-diamino-6-ribosylamino-4(3H)-pyrimidinone 5'-phosphate (DARP), formate and pyrophosphate. The sequence is that of GTP cyclohydrolase-2 from Aliivibrio fischeri (strain MJ11) (Vibrio fischeri).